The primary structure comprises 128 residues: Small ribosomal subunit protein bS16 (128 aa).

Residues 107–128 form a disordered region; the sequence is AAEAKAAAANESDDSGTDSTES. Residues 117 to 128 show a composition bias toward acidic residues; it reads ESDDSGTDSTES.

It belongs to the bacterial ribosomal protein bS16 family.

In Synechococcus sp. (strain CC9311), this protein is Small ribosomal subunit protein bS16.